We begin with the raw amino-acid sequence, 619 residues long: MPTYRSKTSTAGRNMAGARSLWRATGMKDDDFSKPIIAVVNSFTQFVPGHVHLKDLGQLVAREIEAAGGVAKEFNTIAVDDGIAMGHDGMLYSLPSRDIIADSVEYMVNAHCADAMVCISNCDKITPGMLMAAMRLNIPVIFVSGGPMEAGKTRLANPVTKTIELKKLDLVDAMVIAADQSYSDADVAEVERSACPTCGSCSGMFTANSMNCLTEALGLSLPGNGTVVATHADREQLFKRAGRRIVELTRQYYEQDDVRVLPRSVGFNAFENAMTLDIAMGGSTNTILHLLAIAREAGIDFTMRDIDRLSRVVPQLCKVAPNTNKYHIEDVHRAGGIMAILGELDRAGRLHTDVPTVHAPTLKDALDQWDIVRTQDEAVRKFYLAGPAGVPTQIAFSQDTRWPSLDLDRAEGCIRSYEHAFSKEGGLAVLTGNIALDGCVVKTAGVDESILVFEGSAHVTESQDEAVENILNDKVKAGDVVIVRYEGPKGGPGMQEMLYPTSYIKSKGLGKACALLTDGRFSGGTSGLSIGHCSPEAAAGGAIGLVRDGDRIRIDIPNRTIDVLVSDEELARRREEQNAKGWKPAQPRPRKVSAALKAYAKLVMSADKGAVRDLSLLDD.

Residue aspartate 81 coordinates Mg(2+). Cysteine 122 is a [2Fe-2S] cluster binding site. The Mg(2+) site is built by aspartate 123 and lysine 124. The residue at position 124 (lysine 124) is an N6-carboxylysine. Cysteine 201 contacts [2Fe-2S] cluster. Residue glutamate 496 coordinates Mg(2+). Serine 522 acts as the Proton acceptor in catalysis.

It belongs to the IlvD/Edd family. In terms of assembly, homodimer. [2Fe-2S] cluster serves as cofactor. Mg(2+) is required as a cofactor.

The enzyme catalyses (2R)-2,3-dihydroxy-3-methylbutanoate = 3-methyl-2-oxobutanoate + H2O. It catalyses the reaction (2R,3R)-2,3-dihydroxy-3-methylpentanoate = (S)-3-methyl-2-oxopentanoate + H2O. Its pathway is amino-acid biosynthesis; L-isoleucine biosynthesis; L-isoleucine from 2-oxobutanoate: step 3/4. It participates in amino-acid biosynthesis; L-valine biosynthesis; L-valine from pyruvate: step 3/4. Its function is as follows. Functions in the biosynthesis of branched-chain amino acids. Catalyzes the dehydration of (2R,3R)-2,3-dihydroxy-3-methylpentanoate (2,3-dihydroxy-3-methylvalerate) into 2-oxo-3-methylpentanoate (2-oxo-3-methylvalerate) and of (2R)-2,3-dihydroxy-3-methylbutanoate (2,3-dihydroxyisovalerate) into 2-oxo-3-methylbutanoate (2-oxoisovalerate), the penultimate precursor to L-isoleucine and L-valine, respectively. The polypeptide is Dihydroxy-acid dehydratase (Burkholderia vietnamiensis (strain G4 / LMG 22486) (Burkholderia cepacia (strain R1808))).